Consider the following 110-residue polypeptide: Mitochondrial pyruvate carrier 1 (110 aa).

The next 2 helical transmembrane spans lie at 20-36 (HFWG…AGLV) and 44-61 (MISG…ALFM).

It belongs to the mitochondrial pyruvate carrier (MPC) (TC 2.A.105) family.

The protein resides in the mitochondrion inner membrane. In terms of biological role, mediates the uptake of pyruvate into mitochondria. The sequence is that of Mitochondrial pyruvate carrier 1 from Arabidopsis thaliana (Mouse-ear cress).